The chain runs to 226 residues: MKYNNILKGKFILRPNRFIAYVEIDGNEEVCHVKNTGRCKELLIPNATVFIQKNDNPKRKTKFSLIGVVKGDRMINMDSQVTNKVVHEWILKGNLLKDVTLIKPEAKYKNSRFDFYVETKHKKIFIEVKGVTLENNGIVKFPDAPTERGVKHLRELIDCIKEGYDAYVIFVIQMKEVVHFEPNVETHKEFGDTLKYAKENGVNIVAVDCLVDEDSINIRDYVDVIL.

This sequence belongs to the SfsA family.

This is Sugar fermentation stimulation protein homolog from Clostridium beijerinckii (strain ATCC 51743 / NCIMB 8052) (Clostridium acetobutylicum).